Here is a 407-residue protein sequence, read N- to C-terminus: Protein-glutamine gamma-glutamyltransferase (407 aa).

Residues 1-31 (MRIRRRALVFATMSAVLCTAGFMPSAGEAAA) form the signal peptide. The propeptide occupies 32-76 (DNGAGEETKSYAETYRLTADDVANINALNESAPAASSAGPSFRAP). The span at 62–72 (SAPAASSAGPS) shows a compositional bias: low complexity. The segment at 62 to 98 (SAPAASSAGPSFRAPDSDDRVTPPAEPLDRMPDPYRP) is disordered. The segment covering 76–94 (PDSDDRVTPPAEPLDRMPD) has biased composition (basic and acidic residues). The active site involves cysteine 140. The segment at 282-322 (QDRSSSADKRKYGDPDAFRPAPGTGLVDMSRDRNIPRSPTS) is disordered. Basic and acidic residues predominate over residues 286 to 298 (SSADKRKYGDPDA). Residues aspartate 331 and histidine 350 contribute to the active site.

The protein belongs to the bacterial TGase family.

The catalysed reaction is L-glutaminyl-[protein] + L-lysyl-[protein] = [protein]-L-lysyl-N(6)-5-L-glutamyl-[protein] + NH4(+). In terms of biological role, catalyzes the cross-linking of proteins and the conjugation of polyamines to proteins. This chain is Protein-glutamine gamma-glutamyltransferase, found in Streptomyces mobaraensis (Streptoverticillium mobaraense).